Reading from the N-terminus, the 385-residue chain is Carbamoyl phosphate synthase small chain (385 aa).

The segment at 1–196 is CPSase; that stretch reads MEDALGQLAV…KLEKKKKFLF (196 aa). Positions 51, 245, and 247 each coordinate L-glutamine. Residues 197 to 384 enclose the Glutamine amidotransferase type-1 domain; it reads HIVVYDFGVK…IKLLNQVKFS (188 aa). Residue Cys-273 is the Nucleophile of the active site. 4 residues coordinate L-glutamine: Leu-274, Gln-277, Asn-315, and Phe-318. Residues His-357 and Glu-359 contribute to the active site.

The protein belongs to the CarA family. Composed of two chains; the small (or glutamine) chain promotes the hydrolysis of glutamine to ammonia, which is used by the large (or ammonia) chain to synthesize carbamoyl phosphate. Tetramer of heterodimers (alpha,beta)4.

The enzyme catalyses hydrogencarbonate + L-glutamine + 2 ATP + H2O = carbamoyl phosphate + L-glutamate + 2 ADP + phosphate + 2 H(+). It carries out the reaction L-glutamine + H2O = L-glutamate + NH4(+). The protein operates within amino-acid biosynthesis; L-arginine biosynthesis; carbamoyl phosphate from bicarbonate: step 1/1. Its pathway is pyrimidine metabolism; UMP biosynthesis via de novo pathway; (S)-dihydroorotate from bicarbonate: step 1/3. Its function is as follows. Small subunit of the glutamine-dependent carbamoyl phosphate synthetase (CPSase). CPSase catalyzes the formation of carbamoyl phosphate from the ammonia moiety of glutamine, carbonate, and phosphate donated by ATP, constituting the first step of 2 biosynthetic pathways, one leading to arginine and/or urea and the other to pyrimidine nucleotides. The small subunit (glutamine amidotransferase) binds and cleaves glutamine to supply the large subunit with the substrate ammonia. The polypeptide is Carbamoyl phosphate synthase small chain (Buchnera aphidicola subsp. Schizaphis graminum (strain Sg)).